The primary structure comprises 246 residues: Probable phosphatase Tola_0828 (246 aa).

Positions 8, 10, 16, 41, 74, 102, 132, 193, and 195 each coordinate Zn(2+).

It belongs to the PHP family. Zn(2+) serves as cofactor.

In Tolumonas auensis (strain DSM 9187 / NBRC 110442 / TA 4), this protein is Probable phosphatase Tola_0828.